A 497-amino-acid chain; its full sequence is Cytochrome P450 monooxygenase opdB (497 aa).

The helical transmembrane segment at 26-46 (YLGAMAGSVILLISAFTLSLG) threads the bilayer. A disordered region spans residues 69 to 90 (MSKFTRSRELSQQGEDAAGTEP). Residue C454 participates in heme binding.

Heme is required as a cofactor.

Its subcellular location is the membrane. Its pathway is secondary metabolite biosynthesis. In terms of biological role, cytochrome P450 monooxygenase; part of the gene cluster that mediates the biosynthesis of oxopyrrolidines, polyketide-amino acid hybrid compounds with feature structures of tetramic acid. Does not seem to play a role in oxopyrrolidines A and B biosynthesis. May be involved in further modifications of these oxopyrrolidines. The protein is Cytochrome P450 monooxygenase opdB of Penicillium oxalicum (strain 114-2 / CGMCC 5302) (Penicillium decumbens).